Here is a 344-residue protein sequence, read N- to C-terminus: Estradiol 17-beta-dehydrogenase 1 (344 aa).

3–32 (STVVLITGCSSGIGLHLAVRLASDRSQSFK) serves as a coordination point for NAD(+). Serine 143 provides a ligand contact to substrate. Tyrosine 156 functions as the Proton acceptor in the catalytic mechanism.

Belongs to the short-chain dehydrogenases/reductases (SDR) family. In terms of assembly, homodimer.

The protein localises to the cytoplasm. The catalysed reaction is 17beta-estradiol + NAD(+) = estrone + NADH + H(+). It carries out the reaction 17beta-estradiol + NADP(+) = estrone + NADPH + H(+). It functions in the pathway steroid biosynthesis; estrogen biosynthesis. Favors the reduction of estrogens and androgens. Uses preferentially NADH. The sequence is that of Estradiol 17-beta-dehydrogenase 1 (Hsd17b1) from Rattus norvegicus (Rat).